The primary structure comprises 609 residues: Phosphoenolpyruvate carboxykinase [GTP] (609 aa).

Substrate contacts are provided by residues Arg-81 and 220–222; that span reads YGG. Lys-229 and His-249 together coordinate Mn(2+). Ser-271 is a binding site for substrate. 272–277 serves as a coordination point for GTP; the sequence is ACGKTN. Residue Cys-273 is part of the active site. Mn(2+) is bound at residue Asp-296. 387–389 is a binding site for substrate; that stretch reads NSR. GTP contacts are provided by residues Arg-389, Arg-420, and 515–518; that span reads FGEN.

The protein belongs to the phosphoenolpyruvate carboxykinase [GTP] family. Monomer. The cofactor is Mn(2+).

Its subcellular location is the cytoplasm. It carries out the reaction oxaloacetate + GTP = phosphoenolpyruvate + GDP + CO2. It participates in carbohydrate biosynthesis; gluconeogenesis. Its function is as follows. Catalyzes the conversion of oxaloacetate (OAA) to phosphoenolpyruvate (PEP), the rate-limiting step in the metabolic pathway that produces glucose from lactate and other precursors derived from the citric acid cycle. This chain is Phosphoenolpyruvate carboxykinase [GTP], found in Mycolicibacterium paratuberculosis (strain ATCC BAA-968 / K-10) (Mycobacterium paratuberculosis).